The sequence spans 421 residues: Tyrosine--tRNA ligase (421 aa).

Tyr-35 contacts L-tyrosine. The 'HIGH' region signature appears at 40–49; it reads PTGPSLHAGH. L-tyrosine contacts are provided by Tyr-169 and Gln-173. The 'KMSKS' region motif lies at 229-233; it reads KFGKS. Residue Lys-232 participates in ATP binding. Residues 354–420 form the S4 RNA-binding domain; sequence RTIVDLLIAS…GKKNFAGVKI (67 aa).

The protein belongs to the class-I aminoacyl-tRNA synthetase family. TyrS type 1 subfamily. As to quaternary structure, homodimer.

The protein localises to the cytoplasm. The enzyme catalyses tRNA(Tyr) + L-tyrosine + ATP = L-tyrosyl-tRNA(Tyr) + AMP + diphosphate + H(+). In terms of biological role, catalyzes the attachment of tyrosine to tRNA(Tyr) in a two-step reaction: tyrosine is first activated by ATP to form Tyr-AMP and then transferred to the acceptor end of tRNA(Tyr). The sequence is that of Tyrosine--tRNA ligase from Corynebacterium efficiens (strain DSM 44549 / YS-314 / AJ 12310 / JCM 11189 / NBRC 100395).